A 206-amino-acid polypeptide reads, in one-letter code: Ras-related protein ralB-A (206 aa).

Residue 21–28 (GSGGVGKS) participates in GTP binding. The Effector region motif lies at 43–51 (YEPTKADSY). GTP contacts are provided by residues 68–72 (DTAGQ) and 128–131 (NKSD). The segment covering 180 to 189 (KMSENKDKNG) has biased composition (basic and acidic residues). The segment at 180 to 206 (KMSENKDKNGKKSGKSKKGFKQRCCLL) is disordered. The segment covering 190–200 (KKSGKSKKGFK) has biased composition (basic residues). Cys203 is modified (cysteine methyl ester). Residue Cys203 is the site of S-geranylgeranyl cysteine attachment. Positions 204 to 206 (CLL) are cleaved as a propeptide — removed in mature form.

The protein belongs to the small GTPase superfamily. Ras family. In terms of assembly, interacts with ralbp1 and rap1gds1. In terms of tissue distribution, weakly expressed in adult tissues and highest levels were found in heart, brain and testes.

The protein resides in the cell membrane. The protein localises to the midbody. It catalyses the reaction GTP + H2O = GDP + phosphate + H(+). Its function is as follows. Multifunctional GTPase involved in a variety of cellular processes including gene expression, cell migration, cell proliferation, oncogenic transformation and membrane trafficking. Accomplishes its multiple functions by interacting with distinct downstream effectors. Acts as a GTP sensor for GTP-dependent exocytosis of dense core vesicles. Required both to stabilize the assembly of the exocyst complex and to localize functional exocyst complexes to the leading edge of migrating cells. Required for suppression of apoptosis. In late stages of cytokinesis, upon completion of the bridge formation between dividing cells, mediates exocyst recruitment to the midbody to drive abscission. Regulates the actin cytoskeleton to play a role in gastrulation or neurulation. During the cleavage stages, the GTP-bound form induces a cortical reaction that affects the localization of pigment granules. Activated by the FGF pathway via ras and ral-GDS, but independently of raf. Directs ralbp1 to the plasma membrane. Involved in ligand-dependent receptor mediated endocytosis of the EGF and insulin receptors. This is Ras-related protein ralB-A (ralb-a) from Xenopus laevis (African clawed frog).